The chain runs to 110 residues: Large ribosomal subunit protein uL22 (110 aa).

This sequence belongs to the universal ribosomal protein uL22 family. As to quaternary structure, part of the 50S ribosomal subunit.

This protein binds specifically to 23S rRNA; its binding is stimulated by other ribosomal proteins, e.g. L4, L17, and L20. It is important during the early stages of 50S assembly. It makes multiple contacts with different domains of the 23S rRNA in the assembled 50S subunit and ribosome. Functionally, the globular domain of the protein is located near the polypeptide exit tunnel on the outside of the subunit, while an extended beta-hairpin is found that lines the wall of the exit tunnel in the center of the 70S ribosome. The polypeptide is Large ribosomal subunit protein uL22 (Campylobacter fetus subsp. fetus (strain 82-40)).